The primary structure comprises 161 residues: Lipoprotein signal peptidase (161 aa).

Helical transmembrane passes span 9–29 (ISLLMTFIVLVFDQVSKWLIT), 63–83 (KMLFFYIITIIILIVLVIFYI), and 88–108 (FNLFMQVAISLLFAGALGNFI). Catalysis depends on residues aspartate 118 and aspartate 136. Residues 131-151 (IFNIADSSLTIGVIFVIITLI) traverse the membrane as a helical segment.

Belongs to the peptidase A8 family.

The protein localises to the cell membrane. It catalyses the reaction Release of signal peptides from bacterial membrane prolipoproteins. Hydrolyzes -Xaa-Yaa-Zaa-|-(S,diacylglyceryl)Cys-, in which Xaa is hydrophobic (preferably Leu), and Yaa (Ala or Ser) and Zaa (Gly or Ala) have small, neutral side chains.. The protein operates within protein modification; lipoprotein biosynthesis (signal peptide cleavage). Its function is as follows. This protein specifically catalyzes the removal of signal peptides from prolipoproteins. The polypeptide is Lipoprotein signal peptidase (Staphylococcus epidermidis (strain ATCC 35984 / DSM 28319 / BCRC 17069 / CCUG 31568 / BM 3577 / RP62A)).